Consider the following 87-residue polypeptide: Acyl-CoA-binding protein (87 aa).

The region spanning V2–S87 is the ACB domain. Residues Y29 to K33, K51, and K55 contribute to the an acyl-CoA site. K51 is covalently cross-linked (Glycyl lysine isopeptide (Lys-Gly) (interchain with G-Cter in ubiquitin)). K72 is covalently cross-linked (Glycyl lysine isopeptide (Lys-Gly) (interchain with G-Cter in ubiquitin)). Y74 lines the an acyl-CoA pocket.

The protein belongs to the ACBP family.

Binds medium- and long-chain acyl-CoA esters with very high affinity and may function as an intracellular carrier of acyl-CoA esters. Enhances the in vitro activity of the ceramide synthase complex. The chain is Acyl-CoA-binding protein (ACB1) from Saccharomyces cerevisiae (strain ATCC 204508 / S288c) (Baker's yeast).